The chain runs to 238 residues: Ribonuclease PH (238 aa).

Phosphate-binding positions include arginine 86 and 124-126 (GTR).

The protein belongs to the RNase PH family. As to quaternary structure, homohexameric ring arranged as a trimer of dimers.

The catalysed reaction is tRNA(n+1) + phosphate = tRNA(n) + a ribonucleoside 5'-diphosphate. Its function is as follows. Phosphorolytic 3'-5' exoribonuclease that plays an important role in tRNA 3'-end maturation. Removes nucleotide residues following the 3'-CCA terminus of tRNAs; can also add nucleotides to the ends of RNA molecules by using nucleoside diphosphates as substrates, but this may not be physiologically important. Probably plays a role in initiation of 16S rRNA degradation (leading to ribosome degradation) during starvation. The sequence is that of Ribonuclease PH from Shigella dysenteriae serotype 1 (strain Sd197).